The primary structure comprises 633 residues: tRNA uridine 5-carboxymethylaminomethyl modification enzyme MnmG (633 aa).

FAD contacts are provided by residues 15–20, I127, and S182; that span reads GAGHAG. 276–290 contacts NAD(+); the sequence is GPRYCPSIEDKIVRF. Q373 is a binding site for FAD.

Belongs to the MnmG family. Homodimer. Heterotetramer of two MnmE and two MnmG subunits. FAD is required as a cofactor.

It is found in the cytoplasm. Its function is as follows. NAD-binding protein involved in the addition of a carboxymethylaminomethyl (cmnm) group at the wobble position (U34) of certain tRNAs, forming tRNA-cmnm(5)s(2)U34. This chain is tRNA uridine 5-carboxymethylaminomethyl modification enzyme MnmG, found in Streptococcus agalactiae serotype III (strain NEM316).